We begin with the raw amino-acid sequence, 65 residues long: UPF0337 protein BCE_1081 (65 aa).

A disordered region spans residues 1–28 (MSGGLKEQITGKVEKTKGQVKEGIGEVT). Residues 12–28 (KVEKTKGQVKEGIGEVT) show a composition bias toward basic and acidic residues.

This sequence belongs to the UPF0337 (CsbD) family.

The chain is UPF0337 protein BCE_1081 from Bacillus cereus (strain ATCC 10987 / NRS 248).